A 482-amino-acid polypeptide reads, in one-letter code: Tripartite motif-containing protein 10 (482 aa).

Residues C16–K61 form an RING-type zinc finger. Residues E95–L136 form a B box-type zinc finger. Residues C100, H103, C122, and H128 each coordinate Zn(2+). The 190-residue stretch at R293–S482 folds into the B30.2/SPRY domain.

This sequence belongs to the TRIM/RBCC family. Interacts with IFNAR1; this interaction prevents association of IFNAR1 with TYK2.

The protein resides in the cytoplasm. Its function is as follows. E3 ligase that plays an essential role in the differentiation and survival of terminal erythroid cells. May directly bind to PTEN and promote its ubiquitination, resulting in its proteasomal degradation and activation of hypertrophic signaling. In addition, plays a role in immune response regulation by repressing the phosphorylation of STAT1 and STAT2 in the interferon/JAK/STAT signaling pathway independent of its E3 ligase activity. Mechanistically, interacts with the intracellular domain of IFNAR1 and thereby inhibits the association of TYK2 and IFNAR1. This is Tripartite motif-containing protein 10 (TRIM10) from Sus scrofa (Pig).